The following is a 362-amino-acid chain: sn-glycerol-3-phosphate import ATP-binding protein UgpC (362 aa).

An ABC transporter domain is found at 4 to 235 (LSFRNVKKTY…PASTFVAGFI (232 aa)). Residue 37–44 (GPSGCGKS) coordinates ATP.

It belongs to the ABC transporter superfamily. sn-glycerol-3-phosphate importer (TC 3.A.1.1.3) family. In terms of assembly, the complex is composed of two ATP-binding proteins (UgpC), two transmembrane proteins (UgpA and UgpE) and a solute-binding protein (UgpB).

It localises to the cell inner membrane. It carries out the reaction sn-glycerol 3-phosphate(out) + ATP + H2O = sn-glycerol 3-phosphate(in) + ADP + phosphate + H(+). Its function is as follows. Part of the ABC transporter complex UgpBAEC involved in sn-glycerol-3-phosphate (G3P) import. Responsible for energy coupling to the transport system. The chain is sn-glycerol-3-phosphate import ATP-binding protein UgpC from Bordetella parapertussis (strain 12822 / ATCC BAA-587 / NCTC 13253).